The following is a 435-amino-acid chain: MNIGEKILLLLKEEIPEIEYNRYIKHLTYDTKKSTADNAIFYVPNSLVLSWIKNRYSSKIKHLFEIQNSIKVDVSILLKNQVESKKAEQKSVQKQQHSLLNPSHTFENFMVGGSNQFAYAAVKSVSEKAGVLYNPLFIHGGVGLGKTHLMQAAGNVFQNQGKVVIYTTVEQFLNDFIRHVRNKTMERFQEKYRKCDVLLIDDIQFLSNKEGIQEEFFHTFEALKGVGKQIILTADKHPKKIAGLEKRLQSRFEHGLVADIQPPELETKIAIIENKCKINKVILTKDIIHYIATVIESNVREIEGILSKLHAYSQLMHVDIDLQFTKNVLKDQLQENRANLTLDIITQNVAKDLNIKPSEIRSKGRSKNLVYARRIAIYLCRELTQNTMPQLAQYFGMQDHTAISHTLKKIGELMQNDEDFKVKIEELTNKITSSS.

The tract at residues 1 to 70 (MNIGEKILLL…KHLFEIQNSI (70 aa)) is domain I, interacts with DnaA modulators. Residues 70–98 (IKVDVSILLKNQVESKKAEQKSVQKQQHS) form a domain II region. The tract at residues 99–313 (LLNPSHTFEN…GILSKLHAYS (215 aa)) is domain III, AAA+ region. Residues Gly143, Gly145, Lys146, and Thr147 each coordinate ATP. Positions 314–435 (QLMHVDIDLQ…ELTNKITSSS (122 aa)) are domain IV, binds dsDNA.

The protein belongs to the DnaA family. As to quaternary structure, oligomerizes as a right-handed, spiral filament on DNA at oriC.

The protein localises to the cytoplasm. Functionally, plays an essential role in the initiation and regulation of chromosomal replication. ATP-DnaA binds to the origin of replication (oriC) to initiate formation of the DNA replication initiation complex once per cell cycle. Binds the DnaA box (a 9 base pair repeat at the origin) and separates the double-stranded (ds)DNA. Forms a right-handed helical filament on oriC DNA; dsDNA binds to the exterior of the filament while single-stranded (ss)DNA is stabiized in the filament's interior. The ATP-DnaA-oriC complex binds and stabilizes one strand of the AT-rich DNA unwinding element (DUE), permitting loading of DNA polymerase. After initiation quickly degrades to an ADP-DnaA complex that is not apt for DNA replication. Binds acidic phospholipids. This chain is Chromosomal replication initiator protein DnaA, found in Sulfurimonas denitrificans (strain ATCC 33889 / DSM 1251) (Thiomicrospira denitrificans (strain ATCC 33889 / DSM 1251)).